The primary structure comprises 333 residues: Ketol-acid reductoisomerase (NADP(+)) (333 aa).

One can recognise a KARI N-terminal Rossmann domain in the interval 1–179 (MFYDDDADLS…GGTRAGVIKT (179 aa)). NADP(+) contacts are provided by residues 22–25 (YGSQ), lysine 45, serine 48, serine 50, and 80–83 (DTAQ). The active site involves histidine 105. Glycine 131 lines the NADP(+) pocket. The region spanning 180 to 325 (TFKDETETDL…KKLRDLMSWV (146 aa)) is the KARI C-terminal knotted domain. Aspartate 188, glutamate 192, glutamate 224, and glutamate 228 together coordinate Mg(2+). Substrate is bound at residue serine 249.

It belongs to the ketol-acid reductoisomerase family. It depends on Mg(2+) as a cofactor.

The enzyme catalyses (2R)-2,3-dihydroxy-3-methylbutanoate + NADP(+) = (2S)-2-acetolactate + NADPH + H(+). The catalysed reaction is (2R,3R)-2,3-dihydroxy-3-methylpentanoate + NADP(+) = (S)-2-ethyl-2-hydroxy-3-oxobutanoate + NADPH + H(+). The protein operates within amino-acid biosynthesis; L-isoleucine biosynthesis; L-isoleucine from 2-oxobutanoate: step 2/4. Its pathway is amino-acid biosynthesis; L-valine biosynthesis; L-valine from pyruvate: step 2/4. In terms of biological role, involved in the biosynthesis of branched-chain amino acids (BCAA). Catalyzes an alkyl-migration followed by a ketol-acid reduction of (S)-2-acetolactate (S2AL) to yield (R)-2,3-dihydroxy-isovalerate. In the isomerase reaction, S2AL is rearranged via a Mg-dependent methyl migration to produce 3-hydroxy-3-methyl-2-ketobutyrate (HMKB). In the reductase reaction, this 2-ketoacid undergoes a metal-dependent reduction by NADPH to yield (R)-2,3-dihydroxy-isovalerate. The chain is Ketol-acid reductoisomerase (NADP(+)) from Mycobacterium bovis (strain ATCC BAA-935 / AF2122/97).